The sequence spans 293 residues: MFHGSIPALVTPFKNGAVDEAAFAALVERQIAAGSAALVPVGTTGETSTLSTEEHKRVVSLCVEVAAGRVPVIAGAGSNSTDEAIDLVAHAKAAGADAALVVSPYYNNPNQDGLFEHFRAINDAVALPVVLYNVPSRTVVDLKPETVARLARLPNIVGIKDATGDMDRVSYHSALIGDEEQFVQLSGDDPSALGFLAMGGAGCISVTANVAPELCAAMHLAFEDGDLESARAIERRLINLHRAMFCSPSPGPAKYALSRMGLCGPEVRLPLTAPDAAAEAMIDAAMALAGLNT.

Threonine 44 provides a ligand contact to pyruvate. Catalysis depends on tyrosine 132, which acts as the Proton donor/acceptor. Lysine 160 serves as the catalytic Schiff-base intermediate with substrate. Isoleucine 204 lines the pyruvate pocket.

This sequence belongs to the DapA family. In terms of assembly, homotetramer; dimer of dimers.

Its subcellular location is the cytoplasm. The enzyme catalyses L-aspartate 4-semialdehyde + pyruvate = (2S,4S)-4-hydroxy-2,3,4,5-tetrahydrodipicolinate + H2O + H(+). It participates in amino-acid biosynthesis; L-lysine biosynthesis via DAP pathway; (S)-tetrahydrodipicolinate from L-aspartate: step 3/4. Catalyzes the condensation of (S)-aspartate-beta-semialdehyde [(S)-ASA] and pyruvate to 4-hydroxy-tetrahydrodipicolinate (HTPA). In Hyphomonas neptunium (strain ATCC 15444), this protein is 4-hydroxy-tetrahydrodipicolinate synthase.